The following is a 390-amino-acid chain: Mannitol-1-phosphate 5-dehydrogenase (390 aa).

7–18 is a binding site for NAD(+); the sequence is AVHFGGGNIGRG. Lys216 is a catalytic residue.

It belongs to the mannitol dehydrogenase family. Monomer.

It carries out the reaction D-mannitol 1-phosphate + NAD(+) = beta-D-fructose 6-phosphate + NADH + H(+). Functionally, catalyzes the NAD(H)-dependent interconversion of D-fructose 6-phosphate and D-mannitol 1-phosphate in the mannitol metabolic pathway. Required for the process of sporulation on senescing leaf material. The polypeptide is Mannitol-1-phosphate 5-dehydrogenase (mpd1) (Phaeosphaeria nodorum (strain SN15 / ATCC MYA-4574 / FGSC 10173) (Glume blotch fungus)).